A 138-amino-acid chain; its full sequence is Large ribosomal subunit protein uL16 (138 aa).

Basic residues predominate over residues 1–19; the sequence is MLIPRRVKHRKQHHPKRSG. The tract at residues 1 to 24 is disordered; the sequence is MLIPRRVKHRKQHHPKRSGAAKGG.

It belongs to the universal ribosomal protein uL16 family. In terms of assembly, part of the 50S ribosomal subunit.

Its function is as follows. Binds 23S rRNA and is also seen to make contacts with the A and possibly P site tRNAs. This chain is Large ribosomal subunit protein uL16, found in Micrococcus luteus (strain ATCC 4698 / DSM 20030 / JCM 1464 / CCM 169 / CCUG 5858 / IAM 1056 / NBRC 3333 / NCIMB 9278 / NCTC 2665 / VKM Ac-2230) (Micrococcus lysodeikticus).